Consider the following 855-residue polypeptide: Mitofusin FZO1 (855 aa).

Positions 1–19 (MSEGKQQFKDSNKPHKDST) are enriched in basic and acidic residues. The tract at residues 1 to 27 (MSEGKQQFKDSNKPHKDSTDQDDDAAT) is disordered. Topologically, residues 1–705 (MSEGKQQFKD…PSLLFTSKIP (705 aa)) are cytoplasmic. An HRN region spans residues 91–190 (NYNNNRVLLK…KRVDDVSSKV (100 aa)). The 284-residue stretch at 184–467 (DDVSSKVFIT…KKRSLSKLLP (284 aa)) folds into the Dynamin-type G domain. GTP contacts are provided by residues 197-202 (NTGKSA) and 370-373 (KKFD). K398 participates in a covalent cross-link: Glycyl lysine isopeptide (Lys-Gly) (interchain with G-Cter in ubiquitin). S408 contributes to the GTP binding site. The segment covering 413-433 (ELPHYHNENDNEDHGDRKPDD) has biased composition (basic and acidic residues). The segment at 413 to 447 (ELPHYHNENDNEDHGDRKPDDDPYSSSDPDPDFDS) is disordered. K464 participates in a covalent cross-link: Glycyl lysine isopeptide (Lys-Gly) (interchain with G-Cter in ubiquitin). Residues 484 to 547 (KSNMKMYSEE…KEALLNALDV (64 aa)) are HR1. The segment at 630–843 (GKRLKVSLSI…QSLYEGTVAQ (214 aa)) is required for interaction with UGO1. The chain crosses the membrane as a helical span at residues 706 to 726 (TLTLYFLGSTKVVGNIILNGI). The Mitochondrial intermembrane portion of the chain corresponds to 727–736 (KLSSWSSLKK). A helical transmembrane segment spans residues 737 to 757 (LSVPVIVVGSLLGLTYLIHDL). The Cytoplasmic portion of the chain corresponds to 758–855 (PRALPMNLSI…MVEEINLDID (98 aa)). The interval 769-831 (YKRKLQELDY…KKESNLLSIK (63 aa)) is HR2. Residues 798 to 825 (TREILRSCEIIMDKKQITKKELENKKES) are a coiled coil.

The protein belongs to the TRAFAC class dynamin-like GTPase superfamily. Dynamin/Fzo/YdjA family. Mitofusin subfamily. Homodimer. Dimerization depends on GTP binding. Component of a large multiprotein complex of 800 kDa. Binds the cytoplasmic domain of UGO1 which binds MGM1 through its intermembrane space domain. Interacts with MDM30. Interacts with UBP2 and UBP12. Interacts (when ubiquitinated) with DOA1; the interaction recruits FZO1 to CDC48 and promotes FZO1 proteasomal degradation. Ubiquitinated at Lys-398 and Lys-464. MDM30 and UGO1 are involved in ubiquitination. Deubiquitinated by UBP2 and UBP12. UBP2 and UBP12 recognize distinct ubiquitin chains on FZO1 that have opposing effects on mitochondrial fusion. UBP2 removes ubiquitin chains that initiate proteolysis of FZO1 and inhibit fusion. UBP12 recognizes ubiquitin chains that stabilize FZO1 and promote mitochondrial fusion. UBP12 deubiquitylates FZO1 only after oligomerization.

Its subcellular location is the mitochondrion outer membrane. The enzyme catalyses GTP + H2O = GDP + phosphate + H(+). Its function is as follows. Essential transmembrane GTPase, which mediates mitochondrial fusion. Fusion proceeds through several steps; first mitochondria are tethered together, then brought into close contact, followed by the formation of a docking ring around contact areas, and finally membrane fusion. Fusion of mitochondria occurs in many cell types and constitutes an important step in mitochondrial morphology, which is balanced between fusion and fission, mediated by FZO1 and DNM1, respectively. Functions antagonistically with DNM1. Probably acts by forming membrane contact sites that mediate mitochondrial membrane fusion. Mitochondrial docking and fusion requires GTP hydrolysis. Mitochondrial fusion also promotes increased lifespan. This Saccharomyces cerevisiae (strain ATCC 204508 / S288c) (Baker's yeast) protein is Mitofusin FZO1 (FZO1).